The chain runs to 263 residues: Ribonuclease 3 (263 aa).

The interval 1–23 (MPHSKNQRKHRHHSHSERRRQPK) is disordered. The 130-residue stretch at 35 to 164 (FDELLRTLNL…FVGALYLDQG (130 aa)) folds into the RNase III domain. Mg(2+) is bound at residue E77. D81 is an active-site residue. Positions 150 and 153 each coordinate Mg(2+). The active site involves E153. A DRBM domain is found at 190-259 (DFKSQLQEFI…AQQALITLSQ (70 aa)).

Belongs to the ribonuclease III family. Homodimer. Mg(2+) serves as cofactor.

It is found in the cytoplasm. It carries out the reaction Endonucleolytic cleavage to 5'-phosphomonoester.. Digests double-stranded RNA. Involved in the processing of primary rRNA transcript to yield the immediate precursors to the large and small rRNAs (23S and 16S). Processes some mRNAs, and tRNAs when they are encoded in the rRNA operon. Processes pre-crRNA and tracrRNA of type II CRISPR loci if present in the organism. This is Ribonuclease 3 from Halalkalibacterium halodurans (strain ATCC BAA-125 / DSM 18197 / FERM 7344 / JCM 9153 / C-125) (Bacillus halodurans).